A 232-amino-acid chain; its full sequence is Beta-casein (232 aa).

An N-terminal signal peptide occupies residues 1 to 15 (MKVLILACRVALALA). Phosphoserine occurs at positions 30, 32, 33, and 34.

Belongs to the beta-casein family. As to expression, mammary gland specific. Secreted in milk.

It localises to the secreted. Important role in determination of the surface properties of the casein micelles. This is Beta-casein (CSN2) from Camelus dromedarius (Dromedary).